Here is an 894-residue protein sequence, read N- to C-terminus: Peroxisomal hydratase-dehydrogenase-epimerase (894 aa).

Short-chain dehydrogenase like regions lie at residues 6–230 (RFDG…HKNN) and 311–523 (DFKG…CSDK). Residues Val14, Lys53, Asn99, Arg132, Tyr164, Lys168, and Ala197 each coordinate NADP(+). Catalysis depends on Tyr164, which acts as the Proton acceptor. Catalysis depends on Lys168, which acts as the Lowers pKa of active site Tyr. Tyr458 (proton acceptor) is an active-site residue. Residues His693, Gly694, and Lys723 each contribute to the (3R)-3-hydroxydecanoyl-CoA site. The segment at 763–782 (KKPADRGASTAANKPPARSP) is disordered. The MaoC-like domain occupies 776 to 887 (KPPARSPDAV…VKETGKLAIS (112 aa)). Asp803, Asn805, Gly826, Phe851, and Gly853 together coordinate (3R)-3-hydroxydecanoyl-CoA.

The protein belongs to the short-chain dehydrogenases/reductases (SDR) family. Monomer.

It localises to the peroxisome. The catalysed reaction is a (3R)-3-hydroxyacyl-CoA = a (2E)-enoyl-CoA + H2O. It catalyses the reaction a (3R)-3-hydroxyacyl-CoA + NAD(+) = a 3-oxoacyl-CoA + NADH + H(+). It functions in the pathway lipid metabolism; fatty acid beta-oxidation. In terms of biological role, second trifunctional enzyme acting on the beta-oxidation pathway for fatty acids, possessing hydratase-dehydrogenase-epimerase activities. Converts trans-2-enoyl-CoA via D-3-hydroxyacyl-CoA to 3-ketoacyl-CoA. The chain is Peroxisomal hydratase-dehydrogenase-epimerase (fox-2) from Neurospora crassa (strain ATCC 24698 / 74-OR23-1A / CBS 708.71 / DSM 1257 / FGSC 987).